The following is a 373-amino-acid chain: tRNA (guanine(26)-N(2))-dimethyltransferase (373 aa).

Residues 2–365 enclose the Trm1 methyltransferase domain; it reads KIISEGETKL…AELSDLVVLI (364 aa). Arg-35, Arg-66, Asp-86, Asp-113, and Ala-114 together coordinate S-adenosyl-L-methionine.

This sequence belongs to the class I-like SAM-binding methyltransferase superfamily. Trm1 family.

The catalysed reaction is guanosine(26) in tRNA + 2 S-adenosyl-L-methionine = N(2)-dimethylguanosine(26) in tRNA + 2 S-adenosyl-L-homocysteine + 2 H(+). Dimethylates a single guanine residue at position 26 of a number of tRNAs using S-adenosyl-L-methionine as donor of the methyl groups. In Methanococcus maripaludis (strain C5 / ATCC BAA-1333), this protein is tRNA (guanine(26)-N(2))-dimethyltransferase.